Here is a 341-residue protein sequence, read N- to C-terminus: GTP 3',8-cyclase (341 aa).

In terms of domain architecture, Radical SAM core spans 17–235 (TYGRVATDLR…LRTRFELTAE (219 aa)). Arg-26 contributes to the GTP binding site. Positions 33 and 37 each coordinate [4Fe-4S] cluster. Tyr-39 contacts S-adenosyl-L-methionine. Cys-40 contributes to the [4Fe-4S] cluster binding site. A GTP-binding site is contributed by Arg-77. S-adenosyl-L-methionine is bound at residue Gly-81. Thr-108 contacts GTP. Ser-132 provides a ligand contact to S-adenosyl-L-methionine. Lys-169 lines the GTP pocket. Residue Met-203 participates in S-adenosyl-L-methionine binding. The [4Fe-4S] cluster site is built by Cys-268 and Cys-271. Position 273–275 (273–275 (RTR)) interacts with GTP. Cys-285 contributes to the [4Fe-4S] cluster binding site.

It belongs to the radical SAM superfamily. MoaA family. As to quaternary structure, monomer and homodimer. [4Fe-4S] cluster is required as a cofactor.

The catalysed reaction is GTP + AH2 + S-adenosyl-L-methionine = (8S)-3',8-cyclo-7,8-dihydroguanosine 5'-triphosphate + 5'-deoxyadenosine + L-methionine + A + H(+). It functions in the pathway cofactor biosynthesis; molybdopterin biosynthesis. In terms of biological role, catalyzes the cyclization of GTP to (8S)-3',8-cyclo-7,8-dihydroguanosine 5'-triphosphate. This is GTP 3',8-cyclase from Streptomyces coelicolor (strain ATCC BAA-471 / A3(2) / M145).